We begin with the raw amino-acid sequence, 1188 residues long: NF-X1-type zinc finger protein NFXL1 (1188 aa).

The segment covering 1 to 15 (MSFQVRRDRSDDRSH) has biased composition (basic and acidic residues). Disordered stretches follow at residues 1–52 (MSFQ…ETLD) and 65–195 (QHNA…VAKE). Polar residues-rich tracts occupy residues 19–34 (HQQT…SSVV) and 168–186 (ASGT…TRPV). Residues 223–279 (CMICYDKVGRSANIWSCSSCYSIFHINCIKRWARAPTSVDLLAEKNQGDNWRCPGCQ) form an RING-type; degenerate zinc finger. 9 NF-X1-type zinc fingers span residues 335-353 (CPHV…PCKA), 390-409 (CGRH…PCQV), 454-473 (CGNH…DCDL), 513-532 (CRLH…PCLV), 572-607 (CGRH…PCQK), 611-630 (CGQH…PCLE), 668-686 (CGHS…PCST), 721-751 (CGMH…TCRQ), and 760-781 (CRHT…RCEF). Residues 894 to 963 (PKWVLAVEER…KRFTVVHVTA (70 aa)) form the R3H domain. The interval 1100–1188 (SDDSWGAEDS…VVDDWEKVCE (89 aa)) is disordered. 2 stretches are compositionally biased toward polar residues: residues 1126-1138 (AKSN…SVNR) and 1159-1169 (EESSSSKTTGK).

The protein belongs to the NFX1 family. As to expression, expressed in seedlings, roots, stems, leaves, buds, flowers and siliques.

Its subcellular location is the nucleus. Its pathway is protein modification; protein ubiquitination. In terms of biological role, mediates E2-dependent ubiquitination. Confers resistance to osmotic stress such as high salinity. Promotes H(2)O(2) production. Negative regulator of some defense-related genes via an salicylic acid (SA)-dependent signaling pathway. Confers susceptibility to the compatible phytopathogen Pseudomonas syringae pv. tomato strain DC3000 (Pst DC3000). Mediates resistance to type A trichothecenes (phytotoxins produced by phytopathogenic fungi). This chain is NF-X1-type zinc finger protein NFXL1 (NFXL1), found in Arabidopsis thaliana (Mouse-ear cress).